A 432-amino-acid chain; its full sequence is Competence protein ComFA (432 aa).

Positions 40, 43, 60, and 63 each coordinate Zn(2+). Residues 107-257 form the Helicase ATP-binding domain; that stretch reads LQAVDKQKPT…RLGELKRLNL (151 aa). 120–127 serves as a coordination point for ATP; that stretch reads AVTGAGKT. Residues 205-208 carry the DEAD box motif; it reads DEVD. The 144-residue stretch at 289 to 432 folds into the Helicase C-terminal domain; the sequence is KLKSYIEKQR…IQMMNKEAGL (144 aa).

The protein belongs to the DEAD box helicase family. As to quaternary structure, monomer and dimer in solution. Interacts with DprA and ComFC; ComFA-ComFC form rings about 150 Angstroms in diameter with apparent 6-fold symmetry. It depends on Zn(2+) as a cofactor.

The protein localises to the cytoplasm. In terms of biological role, involved in transformation (genetic competence for DNA uptake). DNA uptake is energy dependent, this protein may provide the driving force for DNA uptake. Does not have helicase activity, translocates on single-stranded (ss)DNA in a 5'-3' direction in an ATP-dependent manner, but does not unwind double-stranded (ds)DNA (tested with 5'- and 3'-overhang dsDNA). ATP hydrolysis causes the release of ssDNA from ComFA. A ssDNA-stimulated ATPase; dsDNA does not stimulate ATPase. ATP hydrolysis causes the release of ssDNA from ComFA. ComFC has no effect on ATPase activity. Binds ssDNA but only very poorly to dsDNA in the absence of ATP. Binding to ssDNA does not require free DNA ends. This Streptococcus pneumoniae (strain ATCC BAA-255 / R6) protein is Competence protein ComFA.